Reading from the N-terminus, the 251-residue chain is Capsid protein (251 aa).

Residues Met-1–Lys-35 form a disordered region. The short motif at Lys-3–Ser-20 is the Bipartite nuclear localization signal element. A compositionally biased stretch (polar residues) spans Ser-15–Lys-35. Positions Lys-35–Arg-49 match the Nuclear localization signal motif. Residues Tyr-54 to Ser-71 fold into a zinc finger. Residues Ile-96–Met-117 carry the Nuclear export signal motif. Positions Arg-195 to Arg-242 match the Bipartite nuclear localization signal motif.

It belongs to the geminiviridae capsid protein family. Homomultimer. Binds to single-stranded and double-stranded viral DNA. Interacts (via nuclear localization signals) with host importin alpha-1a.

It localises to the virion. Its subcellular location is the host nucleus. Its function is as follows. Encapsidates the viral DNA into characteristic twinned ('geminate') particles. Binds the genomic viral ssDNA and shuttles it into and out of the cell nucleus. The CP of bipartite geminiviruses is not required for cell-to-cell or systemic movement. The polypeptide is Capsid protein (Macroptilium lathyroides (Lima bean)).